The following is a 99-amino-acid chain: Citrate lyase acyl carrier protein (99 aa).

An O-(phosphoribosyl dephospho-coenzyme A)serine modification is found at Ser-14.

This sequence belongs to the CitD family. Oligomer with a subunit composition of (alpha,beta,gamma)6.

The protein resides in the cytoplasm. In terms of biological role, covalent carrier of the coenzyme of citrate lyase. This Edwardsiella ictaluri (strain 93-146) protein is Citrate lyase acyl carrier protein.